Reading from the N-terminus, the 229-residue chain is MSVSLSRLERQLGYTFKDQELMVLALTHRSFAGRNNERLEFLGDAILNFVAGEALFDRFPLAREGQLSRLRARLVKGETLAVLARGFDLGDYLRLGSGELKSGGFRRESILADALEALIGAIYLDAGMEVARERVLAWLAGEFEGLTLVDTNKDPKTRLQEFLQSRGCELPRYEVVDIQGEPHCRTFFVECEVVLLNEKSRGQGVSRRIAEQVAAAAALIALGVENGND.

The RNase III domain occupies 5 to 127 (LSRLERQLGY…LIGAIYLDAG (123 aa)). Glu40 provides a ligand contact to Mg(2+). Asp44 is a catalytic residue. Positions 113 and 116 each coordinate Mg(2+). The active site involves Glu116. The 71-residue stretch at 154–224 (DPKTRLQEFL…AAAALIALGV (71 aa)) folds into the DRBM domain.

It belongs to the ribonuclease III family. As to quaternary structure, homodimer. It depends on Mg(2+) as a cofactor.

Its subcellular location is the cytoplasm. It carries out the reaction Endonucleolytic cleavage to 5'-phosphomonoester.. Digests double-stranded RNA. Involved in the processing of primary rRNA transcript to yield the immediate precursors to the large and small rRNAs (23S and 16S). Processes some mRNAs, and tRNAs when they are encoded in the rRNA operon. Processes pre-crRNA and tracrRNA of type II CRISPR loci if present in the organism. The polypeptide is Ribonuclease 3 (Pseudomonas fluorescens (strain Pf0-1)).